Consider the following 160-residue polypeptide: Suppressyn (160 aa).

Residues 1–39 form the signal peptide; the sequence is MACIYPTTFYTSLPTKSLNMGISLTTILILSVAVLLSTA. A disordered region spans residues 137–160; that stretch reads AKASKPTTPPENRPRHFHSFIQKL.

In terms of assembly, interacts (secreted) with SLC1A5; mainly at cell surface. As to expression, specifically expressed in placenta by extravillous trophoblasts and syncytiotrophoblasts (at protein level).

It is found in the secreted. Its function is as follows. May play a role in trophoblasts syncytialization, the spontaneous fusion of their plasma membranes, an essential process in placental development. May negatively regulate cell-cell fusion by interacting with SLC1A5, the probable receptor on the cell surface of the fusogenic syncytin-1/ERVW-1. The protein is Suppressyn (ERVH48-1) of Homo sapiens (Human).